Reading from the N-terminus, the 504-residue chain is 6,7,8-trihydroxycoumarin synthase (504 aa).

The helical transmembrane segment at 1-21 threads the bilayer; that stretch reads MEPVFLFLILAFPIASVYLLF. The segment at 363-368 is substrate specificity; sequence PAPVLV. A heme-binding site is contributed by cysteine 444.

Belongs to the cytochrome P450 family. The cofactor is heme.

It localises to the microsome membrane. It participates in secondary metabolite biosynthesis. Its function is as follows. Involved in the biosynthesis of coumarins and furanocoumarins (FCs), natural products required for defense responses against attacks by predators with potential medical and agroindustrial usages such as anticoagulant, rodenticide and artificial vanilla substitutes. Able to catalyze the hydroxylation of esculetin to produce 6,7,8-trihydroxycoumarin. This chain is 6,7,8-trihydroxycoumarin synthase, found in Pastinaca sativa (Wild parsnip).